The primary structure comprises 566 residues: Transcriptional regulatory protein XylR (566 aa).

One can recognise a Sigma-54 factor interaction domain in the interval 235-464 (GIGHSPAYKR…LENALERGVI (230 aa)). ATP is bound by residues 263–270 (GETGVGKE) and 326–335 (ANGGTIFLDE). Residues 534–553 (ISQAARLLGLTRPAMAYRLK) constitute a DNA-binding region (H-T-H motif).

In terms of biological role, regulatory protein of the TOL plasmid xyl operons. In the presence of m-xylene or m-methylbenzyl alcohol XylR activates both the xylCMABN operon and the regulatory gene xylS; xylS itself activates the xylXYZLTEGFJQKIH operon. XylR interacts with sigma-54. This Pseudomonas putida (Arthrobacter siderocapsulatus) protein is Transcriptional regulatory protein XylR (xylR).